Reading from the N-terminus, the 344-residue chain is Lipase chaperone (344 aa).

A helical membrane pass occupies residues 14-34; the sequence is AAIYGGVGLAAVAGVAMWSGA.

It belongs to the lipase chaperone family.

It is found in the cell inner membrane. May be involved in the folding of the extracellular lipase during its passage through the periplasm. The sequence is that of Lipase chaperone from Burkholderia cenocepacia (strain ATCC BAA-245 / DSM 16553 / LMG 16656 / NCTC 13227 / J2315 / CF5610) (Burkholderia cepacia (strain J2315)).